The primary structure comprises 518 residues: Putative succinate-semialdehyde dehydrogenase [NADP(+)] 2 (518 aa).

Residues 157–158 (WN), 181–184 (KPDS), and 232–233 (GS) each bind NADP(+). Catalysis depends on E254, which acts as the Proton acceptor. Residue L255 coordinates NADP(+). C288 acts as the Nucleophile in catalysis. E386 contacts NADP(+).

It belongs to the aldehyde dehydrogenase family.

The enzyme catalyses succinate semialdehyde + NADP(+) + H2O = succinate + NADPH + 2 H(+). In terms of biological role, catalyzes the NADP(+)-dependent oxidation of succinate semialdehyde to succinate. Although it has succinate semialdehyde dehydrogenase activity, is likely to act physiologically on a different aldehyde(s). The polypeptide is Putative succinate-semialdehyde dehydrogenase [NADP(+)] 2 (gabD2) (Mycobacterium ulcerans (strain Agy99)).